A 151-amino-acid polypeptide reads, in one-letter code: MATIENRLEEMLKSPVEALGHTLWGLEYIQAGKHSVVRVYIDNEKGVFIEDCAEVSRQVSAVLDVEDPISTEYTLEVSSPGVDRPLFNAEQYTAYIDETVKIQLTMPVAGSRNLKGTVTGVEGQMLTLTVDGNELIIALDNIRKGNLIAKF.

It belongs to the RimP family.

It is found in the cytoplasm. Required for maturation of 30S ribosomal subunits. The protein is Ribosome maturation factor RimP of Shewanella woodyi (strain ATCC 51908 / MS32).